Here is a 49-residue protein sequence, read N- to C-terminus: Light-harvesting protein B-875 beta chain (49 aa).

The Cytoplasmic portion of the chain corresponds to 2–27; it reads ADKSDLGYTGLTDEQAQELHSVYMSG. Residues His-21 and His-39 each contribute to the a bacteriochlorophyll site. Residues 28 to 45 traverse the membrane as a helical; Signal-anchor for type II membrane protein segment; sequence LWPFSAVAIVAHLAVYIW. At 46–49 the chain is on the periplasmic side; it reads RPWF.

This sequence belongs to the antenna complex beta subunit family. The core complex is formed by different alpha and beta chains, binding bacteriochlorophyll molecules, and arranged most probably in tetrameric structures disposed around the reaction center. The non-pigmented gamma chains may constitute additional components.

It localises to the cell inner membrane. Its function is as follows. Antenna complexes are light-harvesting systems, which transfer the excitation energy to the reaction centers. This Cereibacter sphaeroides (Rhodobacter sphaeroides) protein is Light-harvesting protein B-875 beta chain (pufB).